We begin with the raw amino-acid sequence, 938 residues long: Isoleucine--tRNA ligase (938 aa).

The short motif at Pro58–His68 is the 'HIGH' region element. L-isoleucyl-5'-AMP is bound at residue Glu562. Positions Lys603–Ser607 match the 'KMSKS' region motif. Lys606 contacts ATP. Cys901, Cys904, Cys921, and Cys924 together coordinate Zn(2+).

It belongs to the class-I aminoacyl-tRNA synthetase family. IleS type 1 subfamily. Monomer. The cofactor is Zn(2+).

Its subcellular location is the cytoplasm. It catalyses the reaction tRNA(Ile) + L-isoleucine + ATP = L-isoleucyl-tRNA(Ile) + AMP + diphosphate. Its function is as follows. Catalyzes the attachment of isoleucine to tRNA(Ile). As IleRS can inadvertently accommodate and process structurally similar amino acids such as valine, to avoid such errors it has two additional distinct tRNA(Ile)-dependent editing activities. One activity is designated as 'pretransfer' editing and involves the hydrolysis of activated Val-AMP. The other activity is designated 'posttransfer' editing and involves deacylation of mischarged Val-tRNA(Ile). The sequence is that of Isoleucine--tRNA ligase from Glaesserella parasuis serovar 5 (strain SH0165) (Haemophilus parasuis).